Consider the following 172-residue polypeptide: Small ribosomal subunit protein uS5 (172 aa).

One can recognise an S5 DRBM domain in the interval 17-80; sequence FTEKLIKLNR…ERAKRSMVLF (64 aa).

Belongs to the universal ribosomal protein uS5 family. As to quaternary structure, part of the 30S ribosomal subunit. Contacts proteins S4 and S8.

Its function is as follows. With S4 and S12 plays an important role in translational accuracy. In terms of biological role, located at the back of the 30S subunit body where it stabilizes the conformation of the head with respect to the body. In Treponema pallidum (strain Nichols), this protein is Small ribosomal subunit protein uS5.